A 107-amino-acid polypeptide reads, in one-letter code: High mobility group protein HMG-I/HMG-Y (107 aa).

Over residues Met-1–Ala-13 the composition is skewed to polar residues. The disordered stretch occupies residues Met-1–Gln-107. Ser-2 is subject to N-acetylserine. Lys-7 bears the N6-acetyllysine mark. Ser-8 carries the post-translational modification ADP-ribosylserine. The residue at position 9 (Ser-9) is an ADP-ribosylserine; alternate. Position 9 is a phosphoserine; alternate (Ser-9). Residue Lys-15 is modified to N6-acetyllysine; alternate. Lys-15 is covalently cross-linked (Glycyl lysine isopeptide (Lys-Gly) (interchain with G-Cter in SUMO2); alternate). Residues Lys-15–Arg-24 are compositionally biased toward basic and acidic residues. The a.T hook 1 DNA-binding region spans Thr-21–Lys-31. Position 26 is an asymmetric dimethylarginine; alternate (Arg-26). Arg-26 carries the omega-N-methylarginine; alternate modification. Arg-26 carries the post-translational modification Symmetric dimethylarginine; alternate. At Ser-36 the chain carries Phosphoserine; by HIPK2 and CDC2. Position 39 is a phosphothreonine (Thr-39). Phosphoserine is present on residues Ser-44 and Ser-49. Phosphothreonine; by HIPK2 and CDC2 is present on Thr-53. DNA-binding regions (a.T hook) lie at residues Thr-53–Gly-63 and Thr-78–Lys-89. The interval Thr-53–Thr-77 is interaction with HIPK2. Residues Lys-55–Lys-74 are compositionally biased toward basic residues. Asymmetric dimethylarginine; by PRMT6; alternate occurs at positions 58 and 60. Arg-58 and Arg-60 each carry omega-N-methylarginine; by PRMT6; alternate. The residue at position 78 (Thr-78) is a Phosphothreonine; by HIPK2 and CDC2. Over residues Glu-93–Gln-107 the composition is skewed to acidic residues. Phosphoserine is present on residues Ser-99, Ser-102, and Ser-103.

Belongs to the HMGA family. In terms of assembly, interacts with HIPK2. Isoforms HMG-I and HMG-Y can be phosphorylated by HIPK2. Phosphorylation may modulate DNA-binding affinity. Post-translationally, methylation at Arg-58 is mutually exclusive with methylation at Arg-60.

It is found in the nucleus. The protein localises to the chromosome. Its function is as follows. HMG-I/Y bind preferentially to the minor groove of A+T rich regions in double-stranded DNA. It is suggested that these proteins could function in nucleosome phasing and in the 3'-end processing of mRNA transcripts. They are also involved in the transcription regulation of genes containing, or in close proximity to A+T-rich regions. This is High mobility group protein HMG-I/HMG-Y (Hmga1) from Rattus norvegicus (Rat).